A 172-amino-acid chain; its full sequence is Crossover junction endodeoxyribonuclease RuvC (172 aa).

Residues Asp7, Glu68, and Asp141 contribute to the active site. Asp7, Glu68, and Asp141 together coordinate Mg(2+).

This sequence belongs to the RuvC family. Homodimer which binds Holliday junction (HJ) DNA. The HJ becomes 2-fold symmetrical on binding to RuvC with unstacked arms; it has a different conformation from HJ DNA in complex with RuvA. In the full resolvosome a probable DNA-RuvA(4)-RuvB(12)-RuvC(2) complex forms which resolves the HJ. Requires Mg(2+) as cofactor.

The protein localises to the cytoplasm. It carries out the reaction Endonucleolytic cleavage at a junction such as a reciprocal single-stranded crossover between two homologous DNA duplexes (Holliday junction).. In terms of biological role, the RuvA-RuvB-RuvC complex processes Holliday junction (HJ) DNA during genetic recombination and DNA repair. Endonuclease that resolves HJ intermediates. Cleaves cruciform DNA by making single-stranded nicks across the HJ at symmetrical positions within the homologous arms, yielding a 5'-phosphate and a 3'-hydroxyl group; requires a central core of homology in the junction. The consensus cleavage sequence is 5'-(A/T)TT(C/G)-3'. Cleavage occurs on the 3'-side of the TT dinucleotide at the point of strand exchange. HJ branch migration catalyzed by RuvA-RuvB allows RuvC to scan DNA until it finds its consensus sequence, where it cleaves and resolves the cruciform DNA. The polypeptide is Crossover junction endodeoxyribonuclease RuvC (Frankia casuarinae (strain DSM 45818 / CECT 9043 / HFP020203 / CcI3)).